We begin with the raw amino-acid sequence, 358 residues long: Glyoxylate/succinic semialdehyde reductase 2, chloroplastic (358 aa).

The N-terminal 44 residues, 1-44 (MPLVSLSFASSSSKAMALCSICPRIPLRFRPKPISPFLSKPQIC), are a transit peptide targeting the chloroplast. NADP(+) is bound by residues 70 to 84 (GFLG…MAQN) and T161. Residue K236 is part of the active site. K304 contacts NADP(+).

Belongs to the HIBADH-related family. NP60 subfamily.

It is found in the plastid. Its subcellular location is the chloroplast stroma. The enzyme catalyses glycolate + NADP(+) = glyoxylate + NADPH + H(+). It carries out the reaction 4-hydroxybutanoate + NADP(+) = succinate semialdehyde + NADPH + H(+). Its activity is regulated as follows. The ratio of NADPH/NADP(+) may regulate enzymatic activity. Catalyzes the NADPH-dependent reduction of glyoxylate to glycolate as well as succinic semialdehyde (SSA) to gamma-hydroxybutyrate in vitro. May function in redox homeostasis and play a role in oxidative stress tolerance by detoxifying glyoxylate and SSA generated in glycolate metabolism and GABA metabolism, respectively. This chain is Glyoxylate/succinic semialdehyde reductase 2, chloroplastic (GLYR2), found in Arabidopsis thaliana (Mouse-ear cress).